The sequence spans 207 residues: Dephospho-CoA kinase (207 aa).

Residues V4 to F204 enclose the DPCK domain. An ATP-binding site is contributed by G12–T17.

This sequence belongs to the CoaE family.

The protein localises to the cytoplasm. The catalysed reaction is 3'-dephospho-CoA + ATP = ADP + CoA + H(+). It participates in cofactor biosynthesis; coenzyme A biosynthesis; CoA from (R)-pantothenate: step 5/5. Functionally, catalyzes the phosphorylation of the 3'-hydroxyl group of dephosphocoenzyme A to form coenzyme A. This chain is Dephospho-CoA kinase, found in Aggregatibacter actinomycetemcomitans (Actinobacillus actinomycetemcomitans).